Consider the following 361-residue polypeptide: UDP-3-O-acylglucosamine N-acyltransferase (361 aa).

His-258 (proton acceptor) is an active-site residue.

It belongs to the transferase hexapeptide repeat family. LpxD subfamily. In terms of assembly, homotrimer.

The catalysed reaction is a UDP-3-O-[(3R)-3-hydroxyacyl]-alpha-D-glucosamine + a (3R)-hydroxyacyl-[ACP] = a UDP-2-N,3-O-bis[(3R)-3-hydroxyacyl]-alpha-D-glucosamine + holo-[ACP] + H(+). It functions in the pathway bacterial outer membrane biogenesis; LPS lipid A biosynthesis. Its function is as follows. Catalyzes the N-acylation of UDP-3-O-acylglucosamine using 3-hydroxyacyl-ACP as the acyl donor. Is involved in the biosynthesis of lipid A, a phosphorylated glycolipid that anchors the lipopolysaccharide to the outer membrane of the cell. This chain is UDP-3-O-acylglucosamine N-acyltransferase, found in Nitrobacter hamburgensis (strain DSM 10229 / NCIMB 13809 / X14).